Reading from the N-terminus, the 378-residue chain is Deoxyguanosinetriphosphate triphosphohydrolase-like protein (378 aa).

The disordered stretch occupies residues 1–28; that stretch reads MLAPYACQPGESRGRQQPESMSTFRSPF. A compositionally biased stretch (polar residues) spans 15–26; the sequence is RQQPESMSTFRS. Positions 62 to 198 constitute an HD domain; that stretch reads RLTHSIEVAQ…AAIADDVAYS (137 aa).

It belongs to the dGTPase family. Type 2 subfamily.

This chain is Deoxyguanosinetriphosphate triphosphohydrolase-like protein, found in Cereibacter sphaeroides (strain ATCC 17025 / ATH 2.4.3) (Rhodobacter sphaeroides).